Reading from the N-terminus, the 334-residue chain is Cathepsin L2 (334 aa).

The signal sequence occupies residues 1-17; sequence MNLSLVLAAFCLGIASA. Positions 18–113 are cleaved as a propeptide — activation peptide; sequence VPKFDQNLDT…KVFREPLFLD (96 aa). Cystine bridges form between C135/C178 and C169/C211. Residue C138 is part of the active site. N221 is a glycosylation site (N-linked (GlcNAc...) asparagine). C270 and C323 form a disulfide bridge. Residue H277 is part of the active site. N-linked (GlcNAc...) asparagine glycosylation is present at N292. The active site involves N301.

It belongs to the peptidase C1 family. As to expression, predominantly expressed in the thymus and testis. Also expressed in corneal epithelium, and to a lesser extent in conjunctival epithelium and skin.

The protein resides in the lysosome. The catalysed reaction is The recombinant enzyme hydrolyzes proteins (serum albumin, collagen) and synthetic substrates (Z-Phe-Arg-NHMec &gt; Z-Leu-Arg-NHMec &gt; Z-Val-Arg-NHMec).. Its activity is regulated as follows. Inhibited by CST6. In terms of biological role, cysteine protease. May have an important role in corneal physiology. The sequence is that of Cathepsin L2 (CTSV) from Homo sapiens (Human).